The sequence spans 268 residues: Orotidine 5'-phosphate decarboxylase (268 aa).

Substrate-binding positions include aspartate 38, 60 to 62, 92 to 101, tyrosine 218, and arginine 236; these read KTH and DRKFADIGNT. Catalysis depends on lysine 94, which acts as the Proton donor.

Belongs to the OMP decarboxylase family.

It catalyses the reaction orotidine 5'-phosphate + H(+) = UMP + CO2. It participates in pyrimidine metabolism; UMP biosynthesis via de novo pathway; UMP from orotate: step 2/2. This chain is Orotidine 5'-phosphate decarboxylase (URA3), found in Candida tropicalis (Yeast).